A 136-amino-acid chain; its full sequence is Active regulator of SIRT1 (136 aa).

A Citrulline modification is found at R7. Positions 13–58 are disordered; it reads LAASEAPRDPPGQAKPRGAPVKRPRKTKAIQAQKLRNSAKGKVPKS. S84 bears the Phosphoserine mark.

This sequence belongs to the AROS family. Part of the small subunit (SSU) processome, composed of more than 70 proteins and the RNA chaperone small nucleolar RNA (snoRNA) U3. Interacts with RPS19; the interaction is direct and mediates the integration of RPS19 in state post-A1. Interacts with SIRT1. Citrullinated by PADI4. As to expression, widely expressed (at protein level).

The protein localises to the nucleus. It localises to the nucleolus. Its function is as follows. Part of the small subunit (SSU) processome, first precursor of the small eukaryotic ribosomal subunit. During the assembly of the SSU processome in the nucleolus, many ribosome biogenesis factors, an RNA chaperone and ribosomal proteins associate with the nascent pre-rRNA and work in concert to generate RNA folding, modifications, rearrangements and cleavage as well as targeted degradation of pre-ribosomal RNA by the RNA exosome. Acts as a chaperone that specifically mediates the integration of RPS19 in state post-A1. Direct regulator of SIRT1. Enhances SIRT1-mediated deacetylation of p53/TP53, thereby participating in inhibition of p53/TP53-mediated transcriptional activity. This is Active regulator of SIRT1 from Homo sapiens (Human).